A 181-amino-acid chain; its full sequence is Respiratory supercomplex factor 1, mitochondrial (181 aa).

The region spanning 6 to 97 is the HIG1 domain; sequence LPSSMEDNPQ…TERQQRREFE (92 aa). 2 helical membrane-spanning segments follow: residues 33–49 and 69–86; these read PLIP…LYRA and IYAQ…GMYF. The interval 136–160 is disordered; that stretch reads AAKEAGKRPAPNKIPEQDAARSAIE.

The protein belongs to the RCF1 family. As to quaternary structure, associates with the respiratory chain complex III/complex IV supercomplex.

The protein resides in the mitochondrion membrane. Cytochrome c oxidase subunit which plays a role in assembly of respiratory supercomplexes. This is Respiratory supercomplex factor 1, mitochondrial (rcf1) from Neosartorya fischeri (strain ATCC 1020 / DSM 3700 / CBS 544.65 / FGSC A1164 / JCM 1740 / NRRL 181 / WB 181) (Aspergillus fischerianus).